A 134-amino-acid polypeptide reads, in one-letter code: MSSNAKWLNKVKWDEHGLVPVIAQEVGSNDVLMFAWMNRDALAKTIESGEAIYWSRSRKKLWHKGEESGHTQKVHEVRLDCDEDVVLLKVEQVGAIACHTGRHSCFFQKFEGDAKEGDWETVEPVLKNPETIYK.

D80 contributes to the Mg(2+) binding site. A Zn(2+)-binding site is contributed by C81. Mg(2+) is bound by residues D82 and D84. Zn(2+) is bound by residues C98 and C105.

It belongs to the PRA-CH family. As to quaternary structure, homodimer. It depends on Mg(2+) as a cofactor. Requires Zn(2+) as cofactor.

The protein resides in the cytoplasm. It catalyses the reaction 1-(5-phospho-beta-D-ribosyl)-5'-AMP + H2O = 1-(5-phospho-beta-D-ribosyl)-5-[(5-phospho-beta-D-ribosylamino)methylideneamino]imidazole-4-carboxamide. It participates in amino-acid biosynthesis; L-histidine biosynthesis; L-histidine from 5-phospho-alpha-D-ribose 1-diphosphate: step 3/9. In terms of biological role, catalyzes the hydrolysis of the adenine ring of phosphoribosyl-AMP. This is Phosphoribosyl-AMP cyclohydrolase from Herminiimonas arsenicoxydans.